A 304-amino-acid polypeptide reads, in one-letter code: UDP-3-O-acyl-N-acetylglucosamine deacetylase (304 aa).

The Zn(2+) site is built by H78, H235, and D239. Catalysis depends on H262, which acts as the Proton donor.

The protein belongs to the LpxC family. It depends on Zn(2+) as a cofactor.

The enzyme catalyses a UDP-3-O-[(3R)-3-hydroxyacyl]-N-acetyl-alpha-D-glucosamine + H2O = a UDP-3-O-[(3R)-3-hydroxyacyl]-alpha-D-glucosamine + acetate. It participates in glycolipid biosynthesis; lipid IV(A) biosynthesis; lipid IV(A) from (3R)-3-hydroxytetradecanoyl-[acyl-carrier-protein] and UDP-N-acetyl-alpha-D-glucosamine: step 2/6. Its function is as follows. Catalyzes the hydrolysis of UDP-3-O-myristoyl-N-acetylglucosamine to form UDP-3-O-myristoylglucosamine and acetate, the committed step in lipid A biosynthesis. This chain is UDP-3-O-acyl-N-acetylglucosamine deacetylase, found in Anaeromyxobacter sp. (strain Fw109-5).